We begin with the raw amino-acid sequence, 177 residues long: MSDTEDNKNKQTTRRDFMVLTASSVAAVGAVCTLWPLVDSLNPSADVLALSSIEVDLSNIAVGQTVTVKWQGKPVFITNRTPDKIAEARAVKMSELIDPETDEARVKAGHDNWLVTIGICTHLGCVPLANQGEYDGWFCPCHGSQYDSSGRVRRGPAPLNLAVPPYTFISDKKIRIG.

A helical membrane pass occupies residues 18-38; sequence MVLTASSVAAVGAVCTLWPLV. The 88-residue stretch at 88–175 folds into the Rieske domain; sequence ARAVKMSELI…YTFISDKKIR (88 aa). The [2Fe-2S] cluster site is built by Cys120, His122, Cys139, and His142. A disulfide bridge connects residues Cys125 and Cys141.

Belongs to the Rieske iron-sulfur protein family. As to quaternary structure, the main subunits of complex b-c1 are: cytochrome b, cytochrome c1 and the Rieske protein. Requires [2Fe-2S] cluster as cofactor.

The protein resides in the cell membrane. It catalyses the reaction a quinol + 2 Fe(III)-[cytochrome c](out) = a quinone + 2 Fe(II)-[cytochrome c](out) + 2 H(+)(out). In terms of biological role, component of the ubiquinol-cytochrome c reductase complex (complex III or cytochrome b-c1 complex), which is a respiratory chain that generates an electrochemical potential coupled to ATP synthesis. This is Ubiquinol-cytochrome c reductase iron-sulfur subunit (petA) from Rickettsia felis (strain ATCC VR-1525 / URRWXCal2) (Rickettsia azadi).